We begin with the raw amino-acid sequence, 129 residues long: Small ribosomal subunit protein uS11 (129 aa).

The protein belongs to the universal ribosomal protein uS11 family. Part of the 30S ribosomal subunit. Interacts with proteins S7 and S18. Binds to IF-3.

Functionally, located on the platform of the 30S subunit, it bridges several disparate RNA helices of the 16S rRNA. Forms part of the Shine-Dalgarno cleft in the 70S ribosome. This is Small ribosomal subunit protein uS11 from Limosilactobacillus reuteri (strain DSM 20016) (Lactobacillus reuteri).